The chain runs to 486 residues: Probable glycine dehydrogenase (decarboxylating) subunit 2 (486 aa).

An N6-(pyridoxal phosphate)lysine modification is found at Lys269.

Belongs to the GcvP family. C-terminal subunit subfamily. The glycine cleavage system is composed of four proteins: P, T, L and H. In this organism, the P 'protein' is a heterodimer of two subunits. It depends on pyridoxal 5'-phosphate as a cofactor.

The catalysed reaction is N(6)-[(R)-lipoyl]-L-lysyl-[glycine-cleavage complex H protein] + glycine + H(+) = N(6)-[(R)-S(8)-aminomethyldihydrolipoyl]-L-lysyl-[glycine-cleavage complex H protein] + CO2. Functionally, the glycine cleavage system catalyzes the degradation of glycine. The P protein binds the alpha-amino group of glycine through its pyridoxal phosphate cofactor; CO(2) is released and the remaining methylamine moiety is then transferred to the lipoamide cofactor of the H protein. The protein is Probable glycine dehydrogenase (decarboxylating) subunit 2 of Chlorobium phaeobacteroides (strain DSM 266 / SMG 266 / 2430).